A 440-amino-acid chain; its full sequence is Streptokinase G (440 aa).

The N-terminal stretch at 1–26 (MKNYLSFGMFALLFALTFGTVNSVQA) is a signal peptide.

This protein is not a protease, but it activates plasminogen by complexing with it. As a potential virulence factor, it is thought to prevent the formation of effective fibrin barriers around the site of infection, thereby contributing to the invasiveness of the cells. The polypeptide is Streptokinase G (skg) (Streptococcus sp. (strain 19909)).